Reading from the N-terminus, the 562-residue chain is Cytosolic invertase 1 (562 aa).

This sequence belongs to the glycosyl hydrolase 100 family.

It localises to the cytoplasm. The protein localises to the cytosol. It catalyses the reaction Hydrolysis of terminal non-reducing beta-D-fructofuranoside residues in beta-D-fructofuranosides.. Cytosolic invertase that cleaves sucrose into glucose and fructose and is involved in the regulation of primary root elongation, lateral root formation, floral transition and pollen development. The polypeptide is Cytosolic invertase 1 (Oryza sativa subsp. japonica (Rice)).